A 90-amino-acid polypeptide reads, in one-letter code: Probable Fe(2+)-trafficking protein (90 aa).

This sequence belongs to the Fe(2+)-trafficking protein family.

Could be a mediator in iron transactions between iron acquisition and iron-requiring processes, such as synthesis and/or repair of Fe-S clusters in biosynthetic enzymes. The polypeptide is Probable Fe(2+)-trafficking protein (Coxiella burnetii (strain CbuG_Q212) (Coxiella burnetii (strain Q212))).